The primary structure comprises 150 residues: Troponin C, isotype gamma (150 aa).

Met1 carries the N-acetylmethionine modification. EF-hand domains are found at residues 7–42 (EQLS…MGVK), 43–78 (ISEK…FLIE), 83–118 (ALKA…LDNR), and 119–150 (LTED…MMSG). Residues Asp56, Asp58, Ser60, Glu62, and Glu67 each contribute to the Ca(2+) site. Ca(2+)-binding residues include Asp132, Asp134, Ser136, Thr138, and Glu143.

Belongs to the troponin C family.

Troponin is the central regulatory protein of striated muscle contraction. Tn consists of three components: Tn-I which is the inhibitor of actomyosin ATPase, Tn-T which contains the binding site for tropomyosin and Tn-C. The binding of calcium to Tn-C abolishes the inhibitory action of Tn on actin filaments. The sequence is that of Troponin C, isotype gamma from Astacus leptodactylus (Turkish narrow-clawed crayfish).